A 503-amino-acid chain; its full sequence is Cytochrome P450 monooxygenase roqO (503 aa).

A helical transmembrane segment spans residues 11–31 (YSGTACAISLFIFGITLLFPF). N-linked (GlcNAc...) asparagine glycosylation is present at Asn205. Residue Cys444 participates in heme binding.

Belongs to the cytochrome P450 family. The cofactor is heme.

Its subcellular location is the membrane. It participates in alkaloid biosynthesis. Cytochrome P450 monooxygenase; part of the gene cluster that mediates the biosynthesis of the mycotoxin meleagrin. The first stage is catalyzed by the dipeptide synthase roqA which condenses histidine and tryptophan to produce histidyltryptophanyldiketopiperazine (HTD). HTD is then converted to roquefortine C through two possible pathways. In the first pathway, prenyltransferase roqD transforms HTD to the intermediate roquefortine D, which is in turn converted to roquefortine C by the cytochrome P450 monooxygenase roqR. In the second pathway, HTD is first converted to the intermediate dehydrohistidyltryptophanyldi-ketopiperazine (DHTD) by roqR which is then prenylated by roqD to form roquefortine C. Roquefortine C can be further transformed to meleagrin via three more reactions including oxydation to glandicolin A by roqM, which is further reduced to glandicoline B by roqO. Finally, glandicoline B is converted to meleagrin by the glandicoline B O-methyltransferase roqN. More studies identified further branching and additional metabolites produced by the roquefortine/meleagrin cluster, including roquefortine F, roquefortine L, roquefortine M, roquefortine N and neoxaline. The protein is Cytochrome P450 monooxygenase roqO of Penicillium rubens (strain ATCC 28089 / DSM 1075 / NRRL 1951 / Wisconsin 54-1255) (Penicillium chrysogenum).